The following is a 66-amino-acid chain: UPF0434 protein M446_0487 (66 aa).

It belongs to the UPF0434 family.

The protein is UPF0434 protein M446_0487 of Methylobacterium sp. (strain 4-46).